We begin with the raw amino-acid sequence, 474 residues long: tRNA-2-methylthio-N(6)-dimethylallyladenosine synthase (474 aa).

The region spanning 3–120 is the MTTase N-terminal domain; that stretch reads KKLHIKTWGC…LPEMINSVRG (118 aa). [4Fe-4S] cluster contacts are provided by Cys-12, Cys-49, Cys-83, Cys-157, Cys-161, and Cys-164. A Radical SAM core domain is found at 143–375; it reads RAEGPTAFVS…QERINQQAMA (233 aa). In terms of domain architecture, TRAM spans 378–441; that stretch reads RRMLGTTQRI…PNSLRGKVVR (64 aa).

Belongs to the methylthiotransferase family. MiaB subfamily. In terms of assembly, monomer. [4Fe-4S] cluster is required as a cofactor.

The protein resides in the cytoplasm. The catalysed reaction is N(6)-dimethylallyladenosine(37) in tRNA + (sulfur carrier)-SH + AH2 + 2 S-adenosyl-L-methionine = 2-methylsulfanyl-N(6)-dimethylallyladenosine(37) in tRNA + (sulfur carrier)-H + 5'-deoxyadenosine + L-methionine + A + S-adenosyl-L-homocysteine + 2 H(+). Functionally, catalyzes the methylthiolation of N6-(dimethylallyl)adenosine (i(6)A), leading to the formation of 2-methylthio-N6-(dimethylallyl)adenosine (ms(2)i(6)A) at position 37 in tRNAs that read codons beginning with uridine. The protein is tRNA-2-methylthio-N(6)-dimethylallyladenosine synthase of Salmonella enteritidis PT4 (strain P125109).